Reading from the N-terminus, the 251-residue chain is Adenosylcobinamide-GDP ribazoletransferase (251 aa).

6 helical membrane-spanning segments follow: residues 29 to 49, 65 to 85, 110 to 130, 136 to 156, 175 to 195, and 198 to 218; these read FAGM…ILAV, SLLI…DGAM, AFGA…LCYL, LLIL…IVRY, AIDL…IARF, and LTVA…TGAW.

Belongs to the CobS family. The cofactor is Mg(2+).

The protein localises to the cell inner membrane. It catalyses the reaction alpha-ribazole + adenosylcob(III)inamide-GDP = adenosylcob(III)alamin + GMP + H(+). The catalysed reaction is alpha-ribazole 5'-phosphate + adenosylcob(III)inamide-GDP = adenosylcob(III)alamin 5'-phosphate + GMP + H(+). It participates in cofactor biosynthesis; adenosylcobalamin biosynthesis; adenosylcobalamin from cob(II)yrinate a,c-diamide: step 7/7. Functionally, joins adenosylcobinamide-GDP and alpha-ribazole to generate adenosylcobalamin (Ado-cobalamin). Also synthesizes adenosylcobalamin 5'-phosphate from adenosylcobinamide-GDP and alpha-ribazole 5'-phosphate. This is Adenosylcobinamide-GDP ribazoletransferase from Synechococcus elongatus (strain ATCC 33912 / PCC 7942 / FACHB-805) (Anacystis nidulans R2).